Reading from the N-terminus, the 60-residue chain is Probable tautomerase SP_1017 (60 aa).

Proline 2 (proton acceptor; via imino nitrogen) is an active-site residue.

It belongs to the 4-oxalocrotonate tautomerase family.

The sequence is that of Probable tautomerase SP_1017 from Streptococcus pneumoniae serotype 4 (strain ATCC BAA-334 / TIGR4).